Consider the following 425-residue polypeptide: G protein-activated inward rectifier potassium channel 2 (425 aa).

The Cytoplasmic portion of the chain corresponds to 1–91; the sequence is MTMAKLTESM…ILTTLVDLKW (91 aa). A phosphoserine mark is found at Ser18 and Ser25. Residues 92–116 form a helical membrane-spanning segment; that stretch reads RFNLLIFVMVYTVTWLFFGMIWWLI. At 117–140 the chain is on the extracellular side; it reads AYIRGDMDHVEDPSWTPCVTNLNG. The segment at residues 141–152 is an intramembrane region (helical; Pore-forming); it reads FVSAFLFSIETE. Positions 153–159 form an intramembrane region, pore-forming; the sequence is TTIGYGY. Positions 154–159 match the Selectivity filter motif; it reads TIGYGY. The Extracellular portion of the chain corresponds to 160-168; sequence RVITDKCPE. Residues 169–190 form a helical membrane-spanning segment; it reads GIILLLIQSVLGSIVNAFMVGC. Residues 191–425 are Cytoplasmic-facing; it reads MFVKISQPKK…VANLENESKV (235 aa). The disordered stretch occupies residues 392 to 425; that stretch reads NQHAELETEEEEKNPEEQTERNGDVANLENESKV. Positions 422-425 match the PDZ-binding motif; that stretch reads ESKV.

This sequence belongs to the inward rectifier-type potassium channel (TC 1.A.2.1) family. KCNJ6 subfamily. As to quaternary structure, associates with KCNJ3/GIRK1 or KCNJ5/GRIK4 to form a G-protein-activated heteromultimer pore-forming unit. The resulting inward current is much larger. Interacts (via PDZ-binding motif) with SNX27 (via PDZ domain); the interaction is required when endocytosed to prevent degradation in lysosomes and promote recycling to the plasma membrane. Expressed in insulin-secreting cells and brain.

It is found in the membrane. It catalyses the reaction K(+)(in) = K(+)(out). With respect to regulation, activated by phosphatidylinositol 4,5 biphosphate (PtdIns(4,5)P2). Inward rectifier potassium channels are characterized by a greater tendency to allow potassium to flow into the cell rather than out of it. Their voltage dependence is regulated by the concentration of extracellular potassium; as external potassium is raised, the voltage range of the channel opening shifts to more positive voltages. The inward rectification is mainly due to the blockage of outward current by internal magnesium. This potassium channel may be involved in the regulation of insulin secretion by glucose and/or neurotransmitters acting through G-protein-coupled receptors. The chain is G protein-activated inward rectifier potassium channel 2 (KCNJ6) from Mesocricetus auratus (Golden hamster).